The chain runs to 565 residues: Probable peptidoglycan D,D-transpeptidase PbpC (565 aa).

Residues 10–30 (FILVVTLFVLASLAVSGRLVY) form a helical membrane-spanning segment. The active-site Acyl-ester intermediate is Ser-289.

It belongs to the transpeptidase family. FtsI subfamily.

Its subcellular location is the cell inner membrane. The enzyme catalyses Preferential cleavage: (Ac)2-L-Lys-D-Ala-|-D-Ala. Also transpeptidation of peptidyl-alanyl moieties that are N-acyl substituents of D-alanine.. It functions in the pathway cell wall biogenesis; peptidoglycan biosynthesis. Its function is as follows. Catalyzes cross-linking of the peptidoglycan cell wall at the division septum. Binds penicillin. The sequence is that of Probable peptidoglycan D,D-transpeptidase PbpC from Pseudomonas aeruginosa (strain ATCC 15692 / DSM 22644 / CIP 104116 / JCM 14847 / LMG 12228 / 1C / PRS 101 / PAO1).